A 323-amino-acid chain; its full sequence is ADP-L-glycero-D-manno-heptose-6-epimerase (323 aa).

Residues 10–11 (FI), 31–32 (DN), lysine 38, arginine 53, 75–79 (MGACS), and asparagine 92 each bind NADP(+). Residue tyrosine 143 is the Proton acceptor of the active site. Residue lysine 147 coordinates NADP(+). Asparagine 170 is a substrate binding site. NADP(+) contacts are provided by valine 171 and lysine 179. Lysine 179 (proton acceptor) is an active-site residue. Substrate contacts are provided by residues aspartate 181, lysine 188, 202 to 205 (FRSC), arginine 216, and tyrosine 281.

This sequence belongs to the NAD(P)-dependent epimerase/dehydratase family. HldD subfamily. As to quaternary structure, homopentamer. Requires NADP(+) as cofactor.

The enzyme catalyses ADP-D-glycero-beta-D-manno-heptose = ADP-L-glycero-beta-D-manno-heptose. Its pathway is nucleotide-sugar biosynthesis; ADP-L-glycero-beta-D-manno-heptose biosynthesis; ADP-L-glycero-beta-D-manno-heptose from D-glycero-beta-D-manno-heptose 7-phosphate: step 4/4. Functionally, catalyzes the interconversion between ADP-D-glycero-beta-D-manno-heptose and ADP-L-glycero-beta-D-manno-heptose via an epimerization at carbon 6 of the heptose. The protein is ADP-L-glycero-D-manno-heptose-6-epimerase of Nitratidesulfovibrio vulgaris (strain DP4) (Desulfovibrio vulgaris).